We begin with the raw amino-acid sequence, 655 residues long: A-type voltage-gated potassium channel KCND3 (655 aa).

The Cytoplasmic portion of the chain corresponds to 1–182 (MAAGVAAWLP…FENPHTSTLA (182 aa)). Interaction with KCNIP1 stretches follow at residues 6–21 (AAWLPFARAAAIGWMP) and 70–78 (EKEFFFNED). H104, C110, C131, and C132 together coordinate Zn(2+). Position 153 is a phosphoserine (S153). The chain crosses the membrane as a helical span at residues 183–204 (LVFYYVTGFFIAVSVITNVVET). Residues 205–223 (VPCGTVPGSKELPCGERYS) lie on the Extracellular side of the membrane. The chain crosses the membrane as a helical span at residues 224–246 (VAFFCLDTACVMIFTVEYLLRLF). Over 247–253 (AAPSRYR) the chain is Cytoplasmic. Residues 254–277 (FIRSVMSIIDVVAIMPYYIGLVMT) traverse the membrane as a helical segment. Topologically, residues 278-283 (NNEDVS) are extracellular. The helical; Voltage-sensor transmembrane segment at 284-306 (GAFVTLRVFRVFRIFKFSRHSQG) threads the bilayer. Over 307–318 (LRILGYTLKSCA) the chain is Cytoplasmic. A helical transmembrane segment spans residues 319 to 343 (SELGFLLFSLTMAIIIFATVMFYAE). The Extracellular segment spans residues 344-352 (KGSSASKFT). An intramembrane region (helical) is located at residues 353 to 366 (SIPASFWYTIVTMT). K(+) is bound by residues T367, L368, G369, and Y370. The short motif at 367–372 (TLGYGD) is the Selectivity filter element. The stretch at 367 to 374 (TLGYGDMV) is an intramembrane region. The helical transmembrane segment at 378–400 (IAGKIFGSICSLSGVLVIALPVP) threads the bilayer. Residues 401 to 655 (VIVSNFSRIY…TSNVVKVSVL (255 aa)) lie on the Cytoplasmic side of the membrane. T459 is modified (phosphothreonine). Residues 470-487 (SLIESQHHHLLHCLEKTT) form an interaction with KCNIP1 and KCNIP2 region. A mediates dendritic targeting region spans residues 474 to 489 (SQHHHLLHCLEKTTGL). The interval 523–565 (SSMQNYPSTRSPSLSSHSGLTTTCCSRRSKKTTHLPNSNLPAT) is disordered. A compositionally biased stretch (low complexity) spans 529–548 (PSTRSPSLSSHSGLTTTCCS). S569 bears the Phosphoserine; by CaMK2D mark. A Phosphoserine modification is found at S585. Residues 616-647 (SIPTPPALTPEGESRPPPASPGPNTNIPSITS) are disordered. Polar residues predominate over residues 637 to 647 (GPNTNIPSITS).

The protein belongs to the potassium channel family. D (Shal) (TC 1.A.1.2) subfamily. Kv4.3/KCND3 sub-subfamily. Homotetramer. Heterotetramer with KCND2. Associates with the regulatory subunits KCNIP3 and KCNIP4. Interacts with KCNE1, KCNE2, SCN1B and KCNAB1 and DLG1. Component of heteromultimeric potassium channels. Identified in potassium channel complexes containing KCND1, KCND2, KCND3, KCNIP1, KCNIP2, KCNIP3, KCNIP4, DPP6 and DPP10. Interacts with KCNIP1; each KCNIP1 monomer interacts with two adjacent KCND3 subunits, through both the N-terminal inactivation ball of a KCND3 subunit and a C-terminal helix from the adjacent KCND3 subunit, clamping them together; this interaction stabilizes the tetrameric form and modulates the channel gating kinetics namely channel activation and inactivation kinetics and rate of recovery from inactivation. Interacts with DPP6; this interaction modulates the channel gating kinetics namely channel activation and inactivation kinetics and rate of recovery from inactivation. Interacts with KCNIP2; each KCNIP2 monomer interacts with two adjacent KCND3 subunits, through both the N-terminal inactivation ball of a KCND3 subunit and a C-terminal helix from the adjacent KCND3 subunit, clamping them together; this interaction modulates the channel gating kinetics. Regulated through phosphorylation at Ser-569 by CaMK2D. Highly expressed in brain, in particular in the retrosplenial cortex, medial habenula, anterior thalamus, hippocampus, cerebellum and lateral geniculate and superior colliculus. Highly expressed in heart atrium (at protein level) and throughout the ventricle wall, in lung and vas deferens.

The protein resides in the cell membrane. It is found in the sarcolemma. Its subcellular location is the cell projection. The protein localises to the dendrite. The enzyme catalyses K(+)(in) = K(+)(out). Functionally, pore-forming (alpha) subunit of voltage-gated A-type potassium channels that mediates transmembrane potassium transport in excitable membranes, in brain and heart. In cardiomyocytes, may generate the transient outward potassium current I(To). In neurons, may conduct the transient subthreshold somatodendritic A-type potassium current (ISA). Kinetics properties are characterized by fast activation at subthreshold membrane potentials, rapid inactivation, and quick recovery from inactivation. Channel properties are modulated by interactions with regulatory subunits. Interaction with the regulatory subunits KCNIP1 or KCNIP2 modulates the channel gating kinetics namely channel activation and inactivation kinetics and rate of recovery from inactivation. Likewise, interaction with DPP6 modulates the channel gating kinetics namely channel activation and inactivation kinetics. This chain is A-type voltage-gated potassium channel KCND3, found in Rattus norvegicus (Rat).